The following is a 1357-amino-acid chain: Vascular endothelial growth factor receptor 3 (1357 aa).

The N-terminal stretch at methionine 1–glycine 24 is a signal peptide. Ig-like C2-type domains follow at residues phenylalanine 25 to cysteine 121, isoleucine 138 to isoleucine 244, proline 255 to threonine 343, proline 352 to threonine 442, glutamate 453 to proline 583, proline 583 to tyrosine 690, and proline 699 to serine 785. At phenylalanine 25–glutamate 796 the chain is on the extracellular side. N-linked (GlcNAc...) asparagine glycans are attached at residues asparagine 44, asparagine 48, asparagine 114, asparagine 216, and asparagine 271. 2 cysteine pairs are disulfide-bonded: cysteine 51–cysteine 121 and cysteine 173–cysteine 225. An intrachain disulfide couples cysteine 272 to cysteine 331. Asparagine 360, asparagine 400, and asparagine 440 each carry an N-linked (GlcNAc...) asparagine glycan. Disulfide bonds link cysteine 473/cysteine 562, cysteine 493/cysteine 514, and cysteine 606/cysteine 674. Residues asparagine 553, asparagine 610, asparagine 660, asparagine 707, asparagine 711, and asparagine 751 are each glycosylated (N-linked (GlcNAc...) asparagine). Cysteine 720 and cysteine 772 are disulfide-bonded. Residues isoleucine 797–isoleucine 817 form a helical membrane-spanning segment. At phenylalanine 818–valine 1357 the chain is on the cytoplasmic side. Residues leucine 866 to leucine 1181 form the Protein kinase domain. ATP contacts are provided by residues leucine 872–valine 880 and lysine 900. The tract at residues glutamine 978–valine 1007 is disordered. Residues glutamine 989–proline 1005 are compositionally biased toward polar residues. Aspartate 1045 serves as the catalytic Proton acceptor. Phosphotyrosine; by autocatalysis is present on residues tyrosine 1071 and tyrosine 1076. The tract at residues asparagine 1192–glutamine 1212 is disordered. 4 positions are modified to phosphotyrosine; by autocatalysis: tyrosine 1226, tyrosine 1227, tyrosine 1334, and tyrosine 1338.

It belongs to the protein kinase superfamily. Tyr protein kinase family. CSF-1/PDGF receptor subfamily. As to quaternary structure, interacts with vegfc and vegfd. Monomer in the absence of bound vegfc or vegfd. Homodimer in the presence of bound vegfc or vegfd. Autophosphorylated on tyrosine residues upon ligand binding. Autophosphorylation occurs in trans, i.e. one subunit of the dimeric receptor phosphorylates tyrosine residues on the other subunit.

The protein resides in the cell membrane. It is found in the cytoplasm. The protein localises to the nucleus. The catalysed reaction is L-tyrosyl-[protein] + ATP = O-phospho-L-tyrosyl-[protein] + ADP + H(+). With respect to regulation, present in an inactive conformation in the absence of bound ligand. Binding of vegfc or vegfd leads to dimerization and activation by autophosphorylation on tyrosine residues. Functionally, tyrosine-protein kinase that acts as a cell-surface receptor for vegf or vegfc. Combinations of multiple VEGF receptors are required for development of different blood vessel types in the embryo. Involved in angiogenesis, specifically in VEGF-induced sprouting of new blood vessels, but not required for proper vasculogenesis or hematopoiesis. This Danio rerio (Zebrafish) protein is Vascular endothelial growth factor receptor 3 (flt4).